The following is a 211-amino-acid chain: Glycerol-3-phosphate acyltransferase (211 aa).

5 helical membrane passes run 10–30 (FTTWLIFLISYLIGSIPFGLL), 63–83 (ALTLLCDILKGTLVILVIKFL), 90–110 (NIFISLAGFFAFLGHLFPVWL), 126–146 (LGLYWPAAIVFITAWIVLFLI), and 152–172 (LSALIAVIITPIFVHFSYPYL).

The protein belongs to the PlsY family. In terms of assembly, probably interacts with PlsX.

It localises to the cell inner membrane. It catalyses the reaction an acyl phosphate + sn-glycerol 3-phosphate = a 1-acyl-sn-glycero-3-phosphate + phosphate. It functions in the pathway lipid metabolism; phospholipid metabolism. In terms of biological role, catalyzes the transfer of an acyl group from acyl-phosphate (acyl-PO(4)) to glycerol-3-phosphate (G3P) to form lysophosphatidic acid (LPA). This enzyme utilizes acyl-phosphate as fatty acyl donor, but not acyl-CoA or acyl-ACP. The sequence is that of Glycerol-3-phosphate acyltransferase from Bartonella henselae (strain ATCC 49882 / DSM 28221 / CCUG 30454 / Houston 1) (Rochalimaea henselae).